The chain runs to 488 residues: NADH-ubiquinone oxidoreductase chain 4 (488 aa).

The next 14 membrane-spanning stretches (helical) occupy residues methionine 1–asparagine 21, serine 34–phenylalanine 54, valine 79–leucine 99, valine 110–valine 130, leucine 134–phenylalanine 154, phenylalanine 164–methionine 184, leucine 207–asparagine 227, proline 238–phenylalanine 258, tyrosine 272–leucine 292, isoleucine 301–isoleucine 321, isoleucine 328–isoleucine 348, valine 367–leucine 387, leucine 407–tyrosine 427, and phenylalanine 452–isoleucine 472.

Belongs to the complex I subunit 4 family.

The protein resides in the mitochondrion membrane. The catalysed reaction is a ubiquinone + NADH + 5 H(+)(in) = a ubiquinol + NAD(+) + 4 H(+)(out). Core subunit of the mitochondrial membrane respiratory chain NADH dehydrogenase (Complex I) that is believed to belong to the minimal assembly required for catalysis. Complex I functions in the transfer of electrons from NADH to the respiratory chain. The immediate electron acceptor for the enzyme is believed to be ubiquinone. The protein is NADH-ubiquinone oxidoreductase chain 4 (ND4) of Aspergillus amstelodami.